A 115-amino-acid chain; its full sequence is Envelope glycoprotein N (115 aa).

Positions 1 to 27 (MWLLRPAGSNFIVALIVLACAGPLTCS) are cleaved as a signal peptide. Over 28 to 77 (AQLDAGILNPWGSAGHNDAVMPGMFANSESDERFYSPHCSSRGLPLVNES) the chain is Virion surface. Residues 78 to 98 (MASVIFFLSLAMVCVAIVAIL) traverse the membrane as a helical segment. The Intravirion segment spans residues 99 to 115 (YNCCFNSFKNSVINSRW).

This sequence belongs to the herpesviridae glycoprotein N family. As to quaternary structure, interacts (via N-terminus) with gM (via N-terminus). The gM-gN heterodimer forms the gCII complex.

The protein localises to the virion membrane. The protein resides in the host membrane. It localises to the host Golgi apparatus. It is found in the host trans-Golgi network. In terms of biological role, envelope glycoprotein necessary for proper maturation of gM and modulation of its membrane fusion activity. Also plays a critical role in virion morphogenesis. The protein is Envelope glycoprotein N of Psittacid herpesvirus 1 (isolate Amazon parrot/-/97-0001/1997) (PsHV-1).